We begin with the raw amino-acid sequence, 216 residues long: Probable transaldolase (216 aa).

K84 serves as the catalytic Schiff-base intermediate with substrate.

This sequence belongs to the transaldolase family. Type 3B subfamily.

Its subcellular location is the cytoplasm. It carries out the reaction D-sedoheptulose 7-phosphate + D-glyceraldehyde 3-phosphate = D-erythrose 4-phosphate + beta-D-fructose 6-phosphate. It functions in the pathway carbohydrate degradation; pentose phosphate pathway; D-glyceraldehyde 3-phosphate and beta-D-fructose 6-phosphate from D-ribose 5-phosphate and D-xylulose 5-phosphate (non-oxidative stage): step 2/3. In terms of biological role, transaldolase is important for the balance of metabolites in the pentose-phosphate pathway. The sequence is that of Probable transaldolase from Lysinibacillus sphaericus (strain C3-41).